A 397-amino-acid polypeptide reads, in one-letter code: Argininosuccinate synthase (397 aa).

An ATP-binding site is contributed by 9 to 17 (AYSGGLDTS). Residue Tyr-86 participates in L-citrulline binding. Gly-116 provides a ligand contact to ATP. Positions 118, 122, and 123 each coordinate L-aspartate. Asn-122 lines the L-citrulline pocket. L-citrulline-binding residues include Arg-126, Ser-174, Glu-259, and Tyr-271.

It belongs to the argininosuccinate synthase family. Type 1 subfamily. As to quaternary structure, homotetramer.

It is found in the cytoplasm. It catalyses the reaction L-citrulline + L-aspartate + ATP = 2-(N(omega)-L-arginino)succinate + AMP + diphosphate + H(+). Its pathway is amino-acid biosynthesis; L-arginine biosynthesis; L-arginine from L-ornithine and carbamoyl phosphate: step 2/3. In Lactococcus lactis subsp. cremoris (strain SK11), this protein is Argininosuccinate synthase.